Reading from the N-terminus, the 368-residue chain is H-2 class I histocompatibility antigen, K-W28 alpha chain (368 aa).

Positions 1–21 (MAPCMLLLLLAAALAPTQTRA) are cleaved as a signal peptide. The alpha-1 stretch occupies residues 22-111 (GPHSLRYFHT…LLRYYNQSAG (90 aa)). Topologically, residues 22–305 (GPHSLRYFHT…EPPPSAVSNT (284 aa)) are extracellular. Asparagine 107 carries an N-linked (GlcNAc...) asparagine glycan. The alpha-2 stretch occupies residues 112-203 (GSHTIQRMYG…KNGNATLLRT (92 aa)). Cysteine 122 and cysteine 185 form a disulfide bridge. An N-linked (GlcNAc...) asparagine glycan is attached at asparagine 197. Residues 204 to 295 (DSPKAHVTHH…GLPKPLTLRW (92 aa)) form an alpha-3 region. The Ig-like C1-type domain maps to 206-292 (PKAHVTHHSR…YHQGLPKPLT (87 aa)). A disulfide bridge links cysteine 224 with cysteine 280. Positions 296–305 (EPPPSAVSNT) are connecting peptide. The helical transmembrane segment at 306 to 329 (VIIAVLVVLGAAIVTGAVVAFVMM) threads the bilayer. At 330–368 (RRRNTGGKGGDYALAPGSQTSDLSLPDCKVMVHDPHSLA) the chain is on the cytoplasmic side. A phosphoserine mark is found at serine 350 and serine 353.

Belongs to the MHC class I family. In terms of assembly, heterodimer of an alpha chain and a beta chain (beta-2-microglobulin).

The protein resides in the membrane. In terms of biological role, involved in the presentation of foreign antigens to the immune system. This is H-2 class I histocompatibility antigen, K-W28 alpha chain (H2-K1) from Mus musculus (Mouse).